A 356-amino-acid chain; its full sequence is MSQSGKNGLTYSDAGVDIDAGNLMVEKIKPHVRSTRRPGADGEIGGFGGLFDLKAAGFTDPVLVAANDGVGTKLKIAIDANKHDTVGIDLVAMCVNDLVVQGAEPLFFLDYFATGKLDPDQGAAIVAGIAAGCREAGCALIGGETAEMPGMYSGGDYDLAGFAVGAAERGQLLPAGGIAEGDVILGLASSGVHSNGYSLVRKIVSLSGLAWDAPAPFGEGTLADLLMTPTRIYVKPLLKAIRATGAIKALAHITGGGFPENIPRVLPKHLAAEIDLDAIKPPAVFSWLAKTGGVAANEMLRTFNCGVGMIAVVPAEEADRVAAVLAGEGETVFRLGRMVARQDGAPGTIYKGSLAL.

It belongs to the AIR synthase family.

Its subcellular location is the cytoplasm. It catalyses the reaction 2-formamido-N(1)-(5-O-phospho-beta-D-ribosyl)acetamidine + ATP = 5-amino-1-(5-phospho-beta-D-ribosyl)imidazole + ADP + phosphate + H(+). It functions in the pathway purine metabolism; IMP biosynthesis via de novo pathway; 5-amino-1-(5-phospho-D-ribosyl)imidazole from N(2)-formyl-N(1)-(5-phospho-D-ribosyl)glycinamide: step 2/2. The protein is Phosphoribosylformylglycinamidine cyclo-ligase of Sinorhizobium fredii (strain NBRC 101917 / NGR234).